The following is a 485-amino-acid chain: Calcium/manganese antiporter SLC30A10 (485 aa).

The Cytoplasmic portion of the chain corresponds to 1–10 (MGRYSGKTCR). A helical transmembrane segment spans residues 11-31 (LLFMLVLTVAFFVAELVSGYL). The Extracellular segment spans residues 32 to 40 (GNSIALLSD). The chain crosses the membrane as a helical span at residues 41 to 61 (SFNMLSDLISLCVGLSAGYIA). The Cytoplasmic portion of the chain corresponds to 62-81 (RRPTRGFSATYGYARAEVVG). The helical transmembrane segment at 82 to 102 (ALSNAVFLTALCFTIFVEAVL) threads the bilayer. Residues 103–113 (RLARPERIDDP) lie on the Extracellular side of the membrane. A helical transmembrane segment spans residues 114-134 (ELVLIVGVLGLLVNVVGLLIF). Over 135–244 (QDCAAWFACC…ALNIRGVLLH (110 aa)) the chain is Cytoplasmic. Residues 167-196 (FGGPQGAEDPRRAADPTAPGSDSAVTLRGT) are disordered. A helical membrane pass occupies residues 245 to 265 (VMGDALGSVVVVITAIIFYVL). Residues 266-278 (PLKSEDPCNWQCY) are Extracellular-facing. Residues 279-299 (IDPSLTVLMVIIILSSAFPLI) traverse the membrane as a helical segment. The Cytoplasmic segment spans residues 300-485 (KETAAILLQM…DQCYVNRTHF (186 aa)). A required for plasma membrane localization region spans residues 308-485 (QMVPKGVNME…DQCYVNRTHF (178 aa)).

It belongs to the cation diffusion facilitator (CDF) transporter (TC 2.A.4) family. SLC30A subfamily. Forms homodimers. Forms heterodimers and high-molecular weight oligomers with SLC30A3, SLC30A2 and SLC30A4; heterodimerization is mediated by covalent-bound tyrosine residues, occurs probably in a tissue-specific manner and could mediate the intracellular zinc transport activity into early endosomes and recycling endosomes. In terms of tissue distribution, specifically expressed in fetal liver and fetal brain. Expressed in adult tissues with relative levels small intestine &gt; liver &gt; testes &gt; brain &gt; ovary &gt; colon &gt; cervix &gt; prostate &gt; placenta. Expressed in liver and neurons of the nervous system (at protein level).

It is found in the cell membrane. The protein localises to the golgi apparatus membrane. Its subcellular location is the recycling endosome membrane. It localises to the early endosome membrane. The catalysed reaction is Mn(2+)(out) + Ca(2+)(in) = Mn(2+)(in) + Ca(2+)(out). The enzyme catalyses Zn(2+)(in) = Zn(2+)(out). Calcium:manganese antiporter of the plasma membrane mediating the efflux of intracellular manganese coupled to an active extracellular calcium exchange. Required for intracellular manganese homeostasis, an essential cation for the function of several enzymes, including some crucially important for the metabolism of neurotransmitters and other neuronal metabolic pathways. Manganese can also be cytotoxic and induce oxidative stress, mitochondrial dysfunction and apoptosis. Could also have an intracellular zinc ion transporter activity, directly regulating intracellular zinc ion homeostasis and more indirectly various signaling pathway and biological processes. This is Calcium/manganese antiporter SLC30A10 from Homo sapiens (Human).